Here is a 336-residue protein sequence, read N- to C-terminus: Zinc finger protein GFI1 homolog pag-3 (336 aa).

5 consecutive C2H2-type zinc fingers follow at residues 126–148 (FHCQKCTKLFSTIAALEQHQQVH), 154–176 (FECKQCGKTFKRSSTLSTHLLIH), 182–204 (YPCEYCGKRFHQKSDMKKHTYIH), 210–232 (HKCTVCGKAFSQSSNLITHTRKH), and 238–260 (FACDVCGRTFQRKVDRRRHRESH). Residues 253–290 (RRRHRESHHPGHPEECVSASQISSDLSPKGYMTPPTSN) are disordered.

May interact with transcription factor unc-3. In terms of tissue distribution, expressed in the BDU neurons, the touch neurons, the VA, VB and VC motor neurons, two AVF interneurons and unidentified neurons of the retrovesicular ganglion (at protein level).

The protein resides in the nucleus. The protein localises to the cell projection. It localises to the axon. It is found in the perikaryon. Transcription factor. Plays a role in the determination of neuroblast cell fate and neuronal differentiation. Negatively modulates expression of several components of dense-core vesicles (DCVs), thereby, in a DCV membrane protein ida-1-dependent manner, regulating neurosecretion. Negatively modulates the transcription of its own gene, the mechanosensory gene mec-3, and also other touch neuron-specific genes in the BDU neurons; required for coordinated movement. Required to determine the identity of BDU sensory neurons in concert with transcription factor unc-86, regulating expression of a number of genes, including transcription factors ceh-14 and ahr-1, neuropeptides flp-10, nlp-1 and nlp-15, and tyramine receptor-encoding ser-2. Acts in concert with non-canonical WNT signaling to negatively modulate transcription of mec-3 gene in BDU neurons. May act in concert with transcription factor unc-3 in motor neuron fate determination. May play a role programmed cell death. In Caenorhabditis elegans, this protein is Zinc finger protein GFI1 homolog pag-3.